The following is a 170-amino-acid chain: Methanogen homoaconitase small subunit (170 aa).

The YLRT motif lies at 26–29 (YLRT).

It belongs to the LeuD family. LeuD type 2 subfamily. In terms of assembly, heterotetramer of 2 HacA and 2 HacB proteins.

It catalyses the reaction (2R)-homocitrate = (2R,3S)-homoisocitrate. It carries out the reaction (2R)-homocitrate = cis-homoaconitate + H2O. The catalysed reaction is (2R,3S)-homoisocitrate = cis-homoaconitate + H2O. The enzyme catalyses cis-(homo)2aconitate + H2O = (2R,3S)-iso(homo)2citrate. It catalyses the reaction cis-(homo)3aconitate + H2O = (2R,3S)-iso(homo)3citrate. It participates in organic acid metabolism; 2-oxosuberate biosynthesis. Its function is as follows. Component of a hydro-lyase with broad substrate specificity for cis-unsaturated tricarboxylic acids. Catalyzes both the reversible dehydration of (R)-homocitrate ((R)-2-hydroxybutane-1,2,4-tricarboxylate) to produce cis-homoaconitate ((Z)-but-1-ene-1,2,4-tricarboxylate), and its hydration to homoisocitrate ((1R,2S)-1-hydroxybutane-1,2,4-tricarboxylate). Is also able to hydrate the analogous longer chain substrates cis-homo(2)-aconitate, cis-homo(3)-aconitate. These reactions are part of the biosynthesis pathway of coenzyme B. The sequence is that of Methanogen homoaconitase small subunit (hacB) from Methanothermobacter thermautotrophicus (strain ATCC 29096 / DSM 1053 / JCM 10044 / NBRC 100330 / Delta H) (Methanobacterium thermoautotrophicum).